The following is a 118-amino-acid chain: MARIAGVNIPVHKHTVIGLTSIYGIGKTRAQQICQTCNVDPTVKIKDLSEEQVESLRTEVAKFTVEGDLRREVSMDIKRLMDLGCFRGRRHRRSLPVRGQRTKTNARTRKGPRKPIKA.

The segment at 91 to 118 (HRRSLPVRGQRTKTNARTRKGPRKPIKA) is disordered.

It belongs to the universal ribosomal protein uS13 family. In terms of assembly, part of the 30S ribosomal subunit. Forms a loose heterodimer with protein S19. Forms two bridges to the 50S subunit in the 70S ribosome.

Functionally, located at the top of the head of the 30S subunit, it contacts several helices of the 16S rRNA. In the 70S ribosome it contacts the 23S rRNA (bridge B1a) and protein L5 of the 50S subunit (bridge B1b), connecting the 2 subunits; these bridges are implicated in subunit movement. Contacts the tRNAs in the A and P-sites. This Francisella tularensis subsp. tularensis (strain FSC 198) protein is Small ribosomal subunit protein uS13.